The sequence spans 960 residues: Endosome/lysosome-associated apoptosis and autophagy regulator family member 2 (960 aa).

Residues 1 to 26 form a disordered region; sequence MLFLRPGPARGRGRGRPARAPHSGLS. The N-terminal stretch at 1 to 44 is a signal peptide; the sequence is MLFLRPGPARGRGRGRPARAPHSGLSPPWSPAWICCWALAGCQA. Over 45-860 the chain is Extracellular; that stretch reads AWAGAGDLPS…TCETVDFWLK (816 aa). N171 carries N-linked (GlcNAc...) asparagine glycosylation. 3 disulfide bridges follow: C295–C312, C325–C348, and C328–C360. N-linked (GlcNAc...) asparagine glycans are attached at residues N407 and N622. The MRH domain maps to 597–808; it reads PTCPYIRSMA…LWESVEACPL (212 aa). 4 disulfide bridges follow: C599-C651, C661-C689, C758-C794, and C770-C806. A helical membrane pass occupies residues 861–881; it reads VGAGVGAFTAVLLVALTCYFW. At 882–960 the chain is on the cytoplasmic side; it reads KKNQKLEYKY…QLKSSRSPNI (79 aa). At S949 the chain carries Phosphoserine.

It belongs to the ELAPOR family.

The protein localises to the cell membrane. In terms of biological role, functions as a regulator of the BMP signaling pathway and may be involved in epidermal differentiation. The sequence is that of Endosome/lysosome-associated apoptosis and autophagy regulator family member 2 from Bos taurus (Bovine).